The sequence spans 203 residues: MARFRGSITKVSRRLGVALSPKAEKYLEKRPYAPGEHGQSRRGKVSEYALQLREKQKMKYLYGVLEKQFRNYYKKAVSQRGITGDNLVKLLERRFDNVVFRAGFSPSRAGARQLVTHGHLLINGKKVDIPSYLLKPGDAMEFRQKSQNLDAVADSMNRAPDSRIPSWIQVDKAHKKAVFLAVPEREEVQEPFNEQLVVELYSK.

Residues 93-153 (RRFDNVVFRA…QKSQNLDAVA (61 aa)) enclose the S4 RNA-binding domain.

This sequence belongs to the universal ribosomal protein uS4 family. In terms of assembly, part of the 30S ribosomal subunit. Contacts protein S5. The interaction surface between S4 and S5 is involved in control of translational fidelity.

One of the primary rRNA binding proteins, it binds directly to 16S rRNA where it nucleates assembly of the body of the 30S subunit. Functionally, with S5 and S12 plays an important role in translational accuracy. This is Small ribosomal subunit protein uS4 from Chlorobium phaeobacteroides (strain BS1).